A 61-amino-acid chain; its full sequence is MTLEEKIGQMSQIDARRIGAATALEVRGFLISDSQGIDRHNLIPMSRIDDAVSRKSLVLLK.

Asp33 functions as the Proton donor/acceptor in the catalytic mechanism. Residue Asp33 participates in D-glucose binding.

The protein belongs to the glycosyl hydrolase 3 family. As to quaternary structure, monomer. In terms of processing, glycosylated. As to expression, expressed in petioles and leaves, but not in fruits.

It carries out the reaction protodioscin + H2O = 26-deglucoprotodioscin + D-glucose. Its activity is regulated as follows. Inhibited by Hg(2+) and D-glucono-1,5-lactone. Functionally, beta-glucosidase highly specific for the cleavage of C-26-bound glucose moiety of furostanol glycosides torvosides A and H. Hydrolyzes only p-nitrophenyl-beta-glucoside, but not p-nitrophenyl-beta-D-fucoside, p-nitrophenyl-beta-L-fucoside, p-nitrophenyl-beta-D-xyloside, p-nitrophenyl-beta-D-galactoside, p-nitrophenyl-beta-D-NAc-glucosamine, p-nitrophenyl-beta-D-mannoside or any of the p-nitrophenyl-alpha-glycosides tested. The protein is Furostanol glycoside 26-O-beta-glucosidase of Solanum torvum (Turkey berry).